The primary structure comprises 473 residues: Photosystem II CP43 reaction center protein (473 aa).

Residues 1–14 constitute a propeptide that is removed on maturation; that stretch reads MKNLYSLRRFYHVE. Residue Thr15 is modified to N-acetylthreonine. At Thr15 the chain carries Phosphothreonine. 5 helical membrane-spanning segments follow: residues 69–93, 134–155, 178–200, 255–275, and 291–312; these read LFEV…PHLA, LVGP…KDKN, KAMY…RIIS, KPWA…LSYS, and WFNT…ASQS. Glu367 provides a ligand contact to [CaMn4O5] cluster. The chain crosses the membrane as a helical span at residues 447–471; that stretch reads RARAAAAGFEKGIDRDNEPVLSMRP.

Belongs to the PsbB/PsbC family. PsbC subfamily. As to quaternary structure, PSII is composed of 1 copy each of membrane proteins PsbA, PsbB, PsbC, PsbD, PsbE, PsbF, PsbH, PsbI, PsbJ, PsbK, PsbL, PsbM, PsbT, PsbX, PsbY, PsbZ, Psb30/Ycf12, at least 3 peripheral proteins of the oxygen-evolving complex and a large number of cofactors. It forms dimeric complexes. The cofactor is Binds multiple chlorophylls and provides some of the ligands for the Ca-4Mn-5O cluster of the oxygen-evolving complex. It may also provide a ligand for a Cl- that is required for oxygen evolution. PSII binds additional chlorophylls, carotenoids and specific lipids..

It is found in the plastid. Its subcellular location is the chloroplast thylakoid membrane. Functionally, one of the components of the core complex of photosystem II (PSII). It binds chlorophyll and helps catalyze the primary light-induced photochemical processes of PSII. PSII is a light-driven water:plastoquinone oxidoreductase, using light energy to abstract electrons from H(2)O, generating O(2) and a proton gradient subsequently used for ATP formation. This chain is Photosystem II CP43 reaction center protein, found in Chlorella vulgaris (Green alga).